The following is a 116-amino-acid chain: Vitelline membrane protein Vm32E (116 aa).

The N-terminal stretch at 1 to 17 is a signal peptide; that stretch reads MKIVAFTLVAFVALAGA. The VM domain occupies 36-73; the sequence is GYPAPPCPTNYLFSCQPNLAPAPCAQEAPAYGSAGAYT.

Belongs to the vitelline membrane family.

The protein resides in the secreted. Major early eggshell protein. The chain is Vitelline membrane protein Vm32E from Drosophila santomea (Fruit fly).